Consider the following 329-residue polypeptide: MAKSVSISYLALEQIFNDTIGAGEIKVAGLLVGHPVNGGVHIARTIPTSRGTVTYVRISAEEISRAVEELNPGEKIVGWYHSRPGQGVFFSQDDIETHEKCLDFNPYFQALVIDPHQAKYGTPMADCVRFYTVRNHKEVPIHGYKLTGSSMQSYYDPKEFVFDKYGFPHHYTLTHAGKTKISHRKSNMDASFEYDVFICHAHEDKEFFVRELAEKLHSKGLRVWYDEFTLSLGDNLRRSIENGLAKSRYGIVVLSKRFFEKEWPQKELDGLVAKEVEGKKVILPVWHGITREEVQSFSSILANRLAASSEKGIDYVVNEILRVLRKKSV.

In terms of domain architecture, MPN spans 5-134; it reads VSISYLALEQ…ADCVRFYTVR (130 aa). A TIR domain is found at 192–324; the sequence is FEYDVFICHA…YVVNEILRVL (133 aa). Residues 201–202 and S231 contribute to the NAD(+) site; that span reads AH. E267 is a catalytic residue.

The enzyme catalyses NAD(+) + H2O = ADP-D-ribose + nicotinamide + H(+). Functionally, NAD(+) hydrolase (NADase) that catalyzes cleavage of NAD(+) into ADP-D-ribose (ADPR) and nicotinamide. This is NAD(+) hydrolase TcpA from Theionarchaea archaeon (strain DG-70-1).